Here is a 564-residue protein sequence, read N- to C-terminus: MAVLPESRRLSLLLMAACFLLQALSAHAITRHYKFNVVMRNMTRLCSTKPILTVNGKFPGPTLYAREGDNVLVKVVNHVAHNVTIHWHGVRQIRTGWYDGPAYITQCPIQPGSSFLYNFTITGQRGTLLWHAHINWLRATVHGAIVILPKLGVPYPFPAPHKEAVIVLGEWWKEDTETVINQAMQLGVGPNISDSHTINGHPGPLSECASSQDGFKLSVENGKTYMLRIINAALNDDLFFKVAGHELTVVEVDAVYTKPFKTDTLLITPGQTTNVLVRANQGAGRYLLSVSPFMDAPVQVDNKTGTATLHYANTVSSSMASLTLVKPPPQNATHIVSKFTDSLHSLNSKEYPANVPQTVDHSLLLTVGVGVNPCPSCINGTRVVGTINNVTFIMPSTPILQAHYYNIPGVFTEDFPATPLHKFNYTGSGPKNLQTMNGTRVYRLPYNASVQVVLQDTGIISPESHPIHLHGFNFFVVGKGVGNYNPRTSPSTFNLIDPIERNTIGVPTGGWTAIRFRSDNPGVWFMHCHFEVHTSWGLKMAFVVDNGKRPSETLIPPPKDLPQC.

The signal sequence occupies residues 1-25; that stretch reads MAVLPESRRLSLLLMAACFLLQALS. Plastocyanin-like domains are found at residues 36–152 and 162–314; these read NVVM…PKLG and KEAV…YANT. Residues N41 and N82 are each glycosylated (N-linked (GlcNAc...) asparagine). The Cu cation site is built by H86 and H88. N-linked (GlcNAc...) asparagine glycosylation occurs at N118. Cu cation-binding residues include H131 and H133. N-linked (GlcNAc...) asparagine glycosylation is found at N191, N302, N331, N379, N389, N424, N437, and N447. The region spanning 414 to 548 is the Plastocyanin-like 3 domain; it reads DFPATPLHKF…KMAFVVDNGK (135 aa). Residues H465, H468, H470, H527, C528, H529, and H533 each coordinate Cu cation.

It belongs to the multicopper oxidase family. It depends on Cu cation as a cofactor.

The protein localises to the secreted. It localises to the extracellular space. It is found in the apoplast. The enzyme catalyses 4 hydroquinone + O2 = 4 benzosemiquinone + 2 H2O. Its function is as follows. Lignin degradation and detoxification of lignin-derived products. The protein is Laccase-22 (LAC22) of Oryza sativa subsp. japonica (Rice).